The following is a 499-amino-acid chain: 3-beta-hydroxylase (499 aa).

A helical; Signal-anchor for type II membrane protein transmembrane segment spans residues 2–22 (FSSFETLILSFVSLFFMMIFI). Cysteine 441 contacts heme.

Belongs to the cytochrome P450 family. The cofactor is heme.

It localises to the membrane. It catalyses the reaction (+)-costunolide + reduced [NADPH--hemoprotein reductase] + O2 = 3beta-hydroxycostunolide + oxidized [NADPH--hemoprotein reductase] + H2O + H(+). The catalysed reaction is parthenolide + reduced [NADPH--hemoprotein reductase] + O2 = 3beta-hydroxyparthenolide + oxidized [NADPH--hemoprotein reductase] + H2O + H(+). The protein operates within secondary metabolite biosynthesis; terpenoid biosynthesis. In terms of biological role, involved in the biosynthesis of germacrene-derived sesquiterpene lactones. Component of the parthenolide biosynthetic pathway; parthenolide and conjugates are promising anti-cancer drugs highly active against colon cancer cells. Catalyzes the conversion of costunolide and parthenolide to 3-beta-hydroxycostunolide and 3-beta-hydroxyparthenolide, respectively. This is 3-beta-hydroxylase from Tanacetum parthenium (Feverfew).